We begin with the raw amino-acid sequence, 76 residues long: DNA-directed RNA polymerase subunit epsilon (76 aa).

This sequence belongs to the RNA polymerase subunit epsilon family. In terms of assembly, RNAP is composed of a core of 2 alpha, a beta and a beta' subunit. The core is associated with a delta subunit, and at least one of epsilon or omega. When a sigma factor is associated with the core the holoenzyme is formed, which can initiate transcription.

It catalyses the reaction RNA(n) + a ribonucleoside 5'-triphosphate = RNA(n+1) + diphosphate. In terms of biological role, a non-essential component of RNA polymerase (RNAP). This Lactococcus lactis subsp. cremoris (strain MG1363) protein is DNA-directed RNA polymerase subunit epsilon.